The sequence spans 452 residues: MEFQAVVMAVGGGSRMTDLTSSIPKPLLPVGNKPLIWYPLNLLERVGFEEVIVITTKDVQKALCADFNKMKMKLDIVCIPDEADMGTADSLRHIYQKLKTDVLVLSCDLITDVALHEVVDLFRAHDASLAMLMRKGQESLEPVPGQKGKKKAVEQRDFVGVDSTGKRLLFMANEADLDEELIIKGSILQKHPRIRFHTGLVDAHLYCLKKYVVDFLMENKSITSIRSELIPYLVRKQFSSASSQQGQEEKEEDLKKKELKSLDIYSFIKEANTLTLAPYDTCWNACRGDSWEGLSRSQVRCYVHIMKEGLCSRVSTLGLYMEANRQVSKLLPVICPEESLIHSSAQIVSKHMVGADSLIGPDTQVGEKSSIKHSVIGSSCVIRDRVTVTNCLLMNSVTVEEGSNIQSSIICNDAVIEKGADIKNCLIGSGQRIEAKAKRVNVIVGNDQFLEI.

Position 1 is an N-acetylmethionine (Met-1). At Ser-261 the chain carries Phosphoserine.

Belongs to the eIF-2B gamma/epsilon subunits family. In terms of assembly, component of the translation initiation factor 2B (eIF2B) complex which is a heterodecamer of two sets of five different subunits: alpha, beta, gamma, delta and epsilon. Subunits alpha, beta and delta comprise a regulatory subcomplex and subunits epsilon and gamma comprise a catalytic subcomplex. Within the complex, the hexameric regulatory complex resides at the center, with the two heterodimeric catalytic subcomplexes bound on opposite sides.

It is found in the cytoplasm. The protein localises to the cytosol. Its activity is regulated as follows. Activated by the chemical integrated stress response (ISR) inhibitor ISRIB which stimulates guanine nucleotide exchange factor activity for both phosphorylated and unphosphorylated eIF2. Functionally, acts as a component of the translation initiation factor 2B (eIF2B) complex, which catalyzes the exchange of GDP for GTP on the eukaryotic initiation factor 2 (eIF2) complex gamma subunit. Its guanine nucleotide exchange factor activity is repressed when bound to eIF2 complex phosphorylated on the alpha subunit, thereby limiting the amount of methionyl-initiator methionine tRNA available to the ribosome and consequently global translation is repressed. The chain is Translation initiation factor eIF2B subunit gamma (EIF2B3) from Bos taurus (Bovine).